The following is a 269-amino-acid chain: Prespore protein Dd31 (269 aa).

The segment covering 1–17 (MEHNNNPGTPQMSSEFP) has biased composition (polar residues). Residues 1–35 (MEHNNNPGTPQMSSEFPASTTQTSSSAAAYDNSSH) are disordered. Residues 18-29 (ASTTQTSSSAAA) show a composition bias toward low complexity. 4 helical membrane-spanning segments follow: residues 111–131 (FGIF…VVSI), 139–159 (VDNF…LYFL), 177–197 (YAYL…FVGF), and 225–245 (VSLF…IMYL).

This sequence belongs to the SCAMP family.

The protein resides in the membrane. The protein localises to the spore coat. The sequence is that of Prespore protein Dd31 (spiA) from Dictyostelium discoideum (Social amoeba).